A 449-amino-acid chain; its full sequence is Sensor protein QseC (449 aa).

Over 1–12 (MKLTQRLSLRVR) the chain is Cytoplasmic. The helical transmembrane segment at 13 to 33 (LTLIFLILVSITWAISSFVAW) threads the bilayer. The Periplasmic segment spans residues 34-161 (RKTTDNVDEL…REDMALAIVA (128 aa)). The chain crosses the membrane as a helical span at residues 162-182 (AQLTPWLIALPFMLLILLLLL). Residues 183-235 (HRELRPLKKLAQALRFRSPESETPLDAKGVPSEVRPLVEALNQLFSRIHSMMV) form the HAMP domain. The Cytoplasmic portion of the chain corresponds to 183-449 (HRELRPLKKL…EGGFEAVVSW (267 aa)). The Histidine kinase domain occupies 243 to 449 (DAAHELRSPL…EGGFEAVVSW (207 aa)). Position 246 is a phosphohistidine; by autocatalysis (His246).

The protein localises to the cell inner membrane. It catalyses the reaction ATP + protein L-histidine = ADP + protein N-phospho-L-histidine.. In terms of biological role, member of a two-component regulatory system QseB/QseC. Activates the flagella regulon by activating transcription of FlhDC. May activate QseB by phosphorylation. In Salmonella typhimurium (strain LT2 / SGSC1412 / ATCC 700720), this protein is Sensor protein QseC (qseC).